An 83-amino-acid chain; its full sequence is Putative defensin-like protein 150 (83 aa).

A signal peptide spans 1-25; sequence MMGKHIQLSFAILIMFTIFVLGAVG. Disulfide bonds link C35/C83, C44/C64, C49/C77, and C53/C79.

It belongs to the DEFL family.

The protein resides in the secreted. The chain is Putative defensin-like protein 150 (LCR32) from Arabidopsis thaliana (Mouse-ear cress).